An 809-amino-acid polypeptide reads, in one-letter code: MSELIMNEKTDLEPQVPSVLPLLALRDVVVYPHMQIALFVGREKSINAVDVARNSDNLVFVVAQKDSLTEEIDHDNLYQYGTVAKIVQVVNHENDENCIKVLIEGLHRSKLKKIIDEDSYLTAEHELSPMTINVDKATQETRLQELRNLFAQYAEAKLRNARELVAAANKIEDLLQLMFFVATRVPLNIEIKQKFLEYDEFEAHLQELMNYLMNQSAEQQIEQTLHDSVKRQMEKNQREYFLNEKMKVIQRELSDMNGGAEDDVAEIEKRLAEADLPEHVRKKAEAEFRKLKAMQPASSEAAVVRNYLEVILDTPWNKASKVSINLNKAQEILDADHYGLDDVKDRIVEYLAVQSRVKKLKGPILCLVGPPGVGKTSLGESVAKATGREFVRMALGGVRDEAEIRGHRRTYIGAMPGKIVQSLTKVGVKNPLFLLDEIDKMAQDYRGDPASALLEVLDPSQNSKFNDHYLDLDLDLSEVMFICTANSMNIPEALLDRMEVIRLPGYTEDEKVNIAERYLVPKAIKNNGLRPKELTIHEEAIRDIVQRYTREAGVRNLEREVSKIARKVVKEAVSKKSKNLQLDVTSANLPEYLGPHKFDFGMAEDEAQVGRVNGLAWTSVGGELLTIEVAAVKGKGKFITTGSLGDVMKESITTAMTVVRTRADELGIEASRFEETDVHVHLPEGATPKDGPSAGLALTTALVSAFTGIAIRPDIAMTGETSLGGRAMRIGGLKEKLLAAHRGGIKLVFIPQDNVRDLAEIPDNVKEGLEIKAVKSIDEILPLALTSMPKPLPKTPIVKPVEGSKAARH.

In terms of domain architecture, Lon N-terminal spans 20–216 (LPLLALRDVV…ELMNYLMNQS (197 aa)). Residue 369–376 (GPPGVGKT) participates in ATP binding. The region spanning 606 to 787 (EAQVGRVNGL…DEILPLALTS (182 aa)) is the Lon proteolytic domain. Active-site residues include Ser-693 and Lys-736.

The protein belongs to the peptidase S16 family. Homohexamer. Organized in a ring with a central cavity.

It localises to the cytoplasm. The catalysed reaction is Hydrolysis of proteins in presence of ATP.. Functionally, ATP-dependent serine protease that mediates the selective degradation of mutant and abnormal proteins as well as certain short-lived regulatory proteins. Required for cellular homeostasis and for survival from DNA damage and developmental changes induced by stress. Degrades polypeptides processively to yield small peptide fragments that are 5 to 10 amino acids long. Binds to DNA in a double-stranded, site-specific manner. This is Lon protease from Acinetobacter baumannii (strain AB307-0294).